The following is a 282-amino-acid chain: Probable phosphatase C1620.13 (282 aa).

His61 acts as the Tele-phosphohistidine intermediate in catalysis. The active-site Proton donor/acceptor is Glu135.

It belongs to the phosphoglycerate mutase family. BPG-dependent PGAM subfamily.

It is found in the nucleus. This chain is Probable phosphatase C1620.13, found in Schizosaccharomyces pombe (strain 972 / ATCC 24843) (Fission yeast).